Here is an 896-residue protein sequence, read N- to C-terminus: Translation initiation factor IF-2 (896 aa).

The interval Met-1–Ala-260 is disordered. Positions Lys-19–Arg-34 are enriched in basic and acidic residues. Residues Glu-56 to Lys-66 are compositionally biased toward low complexity. The span at Ser-85–Lys-136 shows a compositional bias: basic and acidic residues. Residues Arg-168–Pro-177 show a composition bias toward low complexity. The tr-type G domain occupies Pro-375–Lys-544. The interval Gly-384–Thr-391 is G1. A GTP-binding site is contributed by Gly-384–Thr-391. The segment at Gly-409 to His-413 is G2. A G3 region spans residues Asp-430–Gly-433. GTP-binding positions include Asp-430 to His-434 and Asn-484 to Asp-487. Residues Asn-484–Asp-487 are G4. A G5 region spans residues Ser-520 to Leu-522. The interval Ser-877–Glu-896 is disordered.

It belongs to the TRAFAC class translation factor GTPase superfamily. Classic translation factor GTPase family. IF-2 subfamily.

The protein resides in the cytoplasm. In terms of biological role, one of the essential components for the initiation of protein synthesis. Protects formylmethionyl-tRNA from spontaneous hydrolysis and promotes its binding to the 30S ribosomal subunits. Also involved in the hydrolysis of GTP during the formation of the 70S ribosomal complex. The sequence is that of Translation initiation factor IF-2 from Treponema denticola (strain ATCC 35405 / DSM 14222 / CIP 103919 / JCM 8153 / KCTC 15104).